A 115-amino-acid polypeptide reads, in one-letter code: T cell receptor beta variable 11-2 (115 aa).

Positions 1–21 are cleaved as a signal peptide; that stretch reads MGTRLLCWAALCLLGAELTEA. The 94-residue stretch at 22 to 115 folds into the Ig-like domain; the sequence is GVAQSPRYKI…SAVYLCASSL (94 aa). Cysteines 42 and 111 form a disulfide.

Alpha-beta TR is a heterodimer composed of an alpha and beta chain; disulfide-linked. The alpha-beta TR is associated with the transmembrane signaling CD3 coreceptor proteins to form the TR-CD3 (TcR or TCR). The assembly of alpha-beta TR heterodimers with CD3 occurs in the endoplasmic reticulum where a single alpha-beta TR heterodimer associates with one CD3D-CD3E heterodimer, one CD3G-CD3E heterodimer and one CD247 homodimer forming a stable octameric structure. CD3D-CD3E and CD3G-CD3E heterodimers preferentially associate with TR alpha and TR beta chains, respectively. The association of the CD247 homodimer is the last step of TcR assembly in the endoplasmic reticulum and is required for transport to the cell surface.

It is found in the cell membrane. Functionally, v region of the variable domain of T cell receptor (TR) beta chain that participates in the antigen recognition. Alpha-beta T cell receptors are antigen specific receptors which are essential to the immune response and are present on the cell surface of T lymphocytes. Recognize peptide-major histocompatibility (MH) (pMH) complexes that are displayed by antigen presenting cells (APC), a prerequisite for efficient T cell adaptive immunity against pathogens. Binding of alpha-beta TR to pMH complex initiates TR-CD3 clustering on the cell surface and intracellular activation of LCK that phosphorylates the ITAM motifs of CD3G, CD3D, CD3E and CD247 enabling the recruitment of ZAP70. In turn ZAP70 phosphorylates LAT, which recruits numerous signaling molecules to form the LAT signalosome. The LAT signalosome propagates signal branching to three major signaling pathways, the calcium, the mitogen-activated protein kinase (MAPK) kinase and the nuclear factor NF-kappa-B (NF-kB) pathways, leading to the mobilization of transcription factors that are critical for gene expression and essential for T cell growth and differentiation. The T cell repertoire is generated in the thymus, by V-(D)-J rearrangement. This repertoire is then shaped by intrathymic selection events to generate a peripheral T cell pool of self-MH restricted, non-autoaggressive T cells. Post-thymic interaction of alpha-beta TR with the pMH complexes shapes TR structural and functional avidity. In Homo sapiens (Human), this protein is T cell receptor beta variable 11-2.